Consider the following 721-residue polypeptide: Putative cullin-like protein 1 (721 aa).

Positions 651–713 constitute a Cullin neddylation domain; the sequence is DRRYAIDAAL…RDYLERDTEN (63 aa).

Belongs to the cullin family.

This is Putative cullin-like protein 1 from Arabidopsis thaliana (Mouse-ear cress).